The chain runs to 175 residues: Cytochrome c-type biogenesis protein CcmE (175 aa).

Topologically, residues 1–8 (MNAVRRKK) are cytoplasmic. A helical; Signal-anchor for type II membrane protein membrane pass occupies residues 9–29 (LIWVAATLAGAIIAVLLVIYA). Residues 30–175 (IGQQTDYYFD…GNHTTSTLQE (146 aa)) are Periplasmic-facing. The heme site is built by histidine 124 and tyrosine 128. The segment at 142–175 (AAKGVTPTSEQFSPAIPVKQTAGEGNHTTSTLQE) is disordered.

The protein belongs to the CcmE/CycJ family.

It localises to the cell inner membrane. Heme chaperone required for the biogenesis of c-type cytochromes. Transiently binds heme delivered by CcmC and transfers the heme to apo-cytochromes in a process facilitated by CcmF and CcmH. This chain is Cytochrome c-type biogenesis protein CcmE, found in Psychrobacter sp. (strain PRwf-1).